The following is a 440-amino-acid chain: Probable exopolygalacturonase C (440 aa).

Residues 1-21 form the signal peptide; that stretch reads MLITNPALLGILASLAPLALG. Residues asparagine 24, asparagine 84, asparagine 151, and asparagine 219 are each glycosylated (N-linked (GlcNAc...) asparagine). 2 PbH1 repeats span residues 217 to 238 and 240 to 261; these read GTNI…AVNT and SHNI…SIGS. Residue aspartate 231 is the Proton donor of the active site. The active site involves histidine 255. The N-linked (GlcNAc...) asparagine glycan is linked to asparagine 271. The stretch at 272-293 is one PbH1 3 repeat; that stretch reads ITNLRFEDVTVIDALYAARFKS. N-linked (GlcNAc...) asparagine glycosylation is found at asparagine 313 and asparagine 350. Cysteines 389 and 395 form a disulfide. N-linked (GlcNAc...) asparagine glycosylation occurs at asparagine 434.

The protein belongs to the glycosyl hydrolase 28 family.

The protein resides in the secreted. The enzyme catalyses [(1-&gt;4)-alpha-D-galacturonosyl](n) + H2O = alpha-D-galacturonate + [(1-&gt;4)-alpha-D-galacturonosyl](n-1). Its function is as follows. Specific in hydrolyzing the terminal glycosidic bond of polygalacturonic acid and oligogalacturonates. This chain is Probable exopolygalacturonase C (pgxC), found in Neosartorya fischeri (strain ATCC 1020 / DSM 3700 / CBS 544.65 / FGSC A1164 / JCM 1740 / NRRL 181 / WB 181) (Aspergillus fischerianus).